Here is a 93-residue protein sequence, read N- to C-terminus: Small ribosomal subunit protein uS19m (93 aa).

This sequence belongs to the universal ribosomal protein uS19 family. Component of the mitochondrial small ribosomal subunit (mt-SSU). Mature yeast 74S mitochondrial ribosomes consist of a small (37S) and a large (54S) subunit. The 37S small subunit contains a 15S ribosomal RNA (15S mt-rRNA) and at least 32 different proteins. The 54S large subunit contains a 21S rRNA (21S mt-rRNA) and at least 45 different proteins.

It is found in the mitochondrion. In terms of biological role, component of the mitochondrial ribosome (mitoribosome), a dedicated translation machinery responsible for the synthesis of mitochondrial genome-encoded proteins, including at least some of the essential transmembrane subunits of the mitochondrial respiratory chain. The mitoribosomes are attached to the mitochondrial inner membrane and translation products are cotranslationally integrated into the membrane. This chain is Small ribosomal subunit protein uS19m (rsm19), found in Schizosaccharomyces pombe (strain 972 / ATCC 24843) (Fission yeast).